The following is a 116-amino-acid chain: Large ribosomal subunit protein uL18 (116 aa).

It belongs to the universal ribosomal protein uL18 family. As to quaternary structure, part of the 50S ribosomal subunit; part of the 5S rRNA/L5/L18/L25 subcomplex. Contacts the 5S and 23S rRNAs.

Its function is as follows. This is one of the proteins that bind and probably mediate the attachment of the 5S RNA into the large ribosomal subunit, where it forms part of the central protuberance. This Shewanella denitrificans (strain OS217 / ATCC BAA-1090 / DSM 15013) protein is Large ribosomal subunit protein uL18.